The chain runs to 454 residues: Cobyrinate a,c-diamide synthase (454 aa).

The 197-residue stretch at 244-440 folds into the GATase cobBQ-type domain; the sequence is RLGIAKDKAF…LHVHFYQNPK (197 aa). Residue C326 is the Nucleophile of the active site.

The protein belongs to the CobB/CbiA family. The cofactor is Mg(2+).

It catalyses the reaction cob(II)yrinate + 2 L-glutamine + 2 ATP + 2 H2O = cob(II)yrinate a,c diamide + 2 L-glutamate + 2 ADP + 2 phosphate + 2 H(+). Its pathway is cofactor biosynthesis; adenosylcobalamin biosynthesis; cob(II)yrinate a,c-diamide from sirohydrochlorin (anaerobic route): step 10/10. Its function is as follows. Catalyzes the ATP-dependent amidation of the two carboxylate groups at positions a and c of cobyrinate, using either L-glutamine or ammonia as the nitrogen source. In Limosilactobacillus reuteri subsp. reuteri (strain JCM 1112) (Lactobacillus reuteri), this protein is Cobyrinate a,c-diamide synthase.